The sequence spans 739 residues: AN1-type zinc finger protein 4 (739 aa).

The Ubiquitin-like domain maps to 54–129 (MELFIETLTG…LKLVLAMRGG (76 aa)). A compositionally biased stretch (basic residues) spans 246-255 (KPKKVVKVKP). Disordered regions lie at residues 246-270 (KPKK…STAA) and 287-316 (LPSG…RPVS). An AN1-type zinc finger spans residues 673–720 (KKIMKHCFLCGKKTGLATSFECRCGNNFCASHRYAEAHGCTYDYKSAG). Residues C679, C682, C694, C696, C701, H704, H710, and C712 each contribute to the Zn(2+) site.

The polypeptide is AN1-type zinc finger protein 4 (Zfand4) (Mus musculus (Mouse)).